The chain runs to 465 residues: Ribulose bisphosphate carboxylase large chain (465 aa).

Lys-4 carries the post-translational modification N6,N6,N6-trimethyllysine. Substrate is bound by residues Asn-113 and Thr-163. The active-site Proton acceptor is the Lys-165. Lys-167 is a binding site for substrate. Residues Lys-191, Asp-193, and Glu-194 each contribute to the Mg(2+) site. N6-carboxylysine is present on Lys-191. His-284 serves as the catalytic Proton acceptor. Positions 285, 317, and 369 each coordinate substrate.

It belongs to the RuBisCO large chain family. Type I subfamily. Heterohexadecamer of 8 large chains and 8 small chains; disulfide-linked. The disulfide link is formed within the large subunit homodimers. Requires Mg(2+) as cofactor. In terms of processing, the disulfide bond which can form in the large chain dimeric partners within the hexadecamer appears to be associated with oxidative stress and protein turnover.

The protein resides in the plastid. Its subcellular location is the chloroplast. It carries out the reaction 2 (2R)-3-phosphoglycerate + 2 H(+) = D-ribulose 1,5-bisphosphate + CO2 + H2O. The enzyme catalyses D-ribulose 1,5-bisphosphate + O2 = 2-phosphoglycolate + (2R)-3-phosphoglycerate + 2 H(+). In terms of biological role, ruBisCO catalyzes two reactions: the carboxylation of D-ribulose 1,5-bisphosphate, the primary event in carbon dioxide fixation, as well as the oxidative fragmentation of the pentose substrate in the photorespiration process. Both reactions occur simultaneously and in competition at the same active site. The sequence is that of Ribulose bisphosphate carboxylase large chain from Dillenia indica (Elephant apple).